Here is a 293-residue protein sequence, read N- to C-terminus: Mating-type protein A-1 (293 aa).

Residues 42-97 (AAKKKVNGFMGFRSYYSPLFSQLPQKERSPFMTILWQHDPFHNEWDFMCSVYSSIR) constitute a DNA-binding region (alpha box).

It belongs to the MATALPHA1 family.

The protein localises to the nucleus. Mating type proteins are sequence specific DNA-binding proteins that act as master switches in yeast differentiation by controlling gene expression in a cell type-specific fashion. Transcriptional activator that induces the transcription of A-specific genes like mating factor ccg-4. Required for mating as an A-cell and for blocking of heterokaryon formation (vegetative incompatibility). The chain is Mating-type protein A-1 (mtA-1) from Neurospora crassa (strain ATCC 24698 / 74-OR23-1A / CBS 708.71 / DSM 1257 / FGSC 987).